The chain runs to 205 residues: Keratin-associated protein 4-6 (205 aa).

Repeat copies occupy residues 20–24, 25–29, 30–34, 35–39, 40–44, 45–49, 50–54, 55–59, 60–64, 65–68, 69–73, 74–78, 79–83, 84–88, 89–93, 94–98, 99–103, 104–108, 114–118, 119–123, 124–128, 129–133, 134–138, 139–143, 144–148, 149–153, 154–158, 159–163, 164–168, and 169–173. Residues 20–173 form a 30 X 5 AA repeats of C-C-[IRQVEL]-[SPTR]-[STVQRCP] region; that stretch reads CCRPSCCQTT…CCRPCCCLRP (154 aa).

Belongs to the KRTAP type 4 family. As to quaternary structure, interacts with hair keratins. In terms of tissue distribution, expressed in the hair follicles.

Functionally, in the hair cortex, hair keratin intermediate filaments are embedded in an interfilamentous matrix, consisting of hair keratin-associated proteins (KRTAP), which are essential for the formation of a rigid and resistant hair shaft through their extensive disulfide bond cross-linking with abundant cysteine residues of hair keratins. The matrix proteins include the high-sulfur and high-glycine-tyrosine keratins. In Homo sapiens (Human), this protein is Keratin-associated protein 4-6 (KRTAP4-6).